A 326-amino-acid chain; its full sequence is Interleukin-1-binding protein (326 aa).

The signal sequence occupies residues 1–18; that stretch reads MSIPPVIFLPIFFYSSFV. 3 Ig-like C2-type domains span residues 24–115, 122–208, and 221–322; these read PECI…LNLT, SNID…YDVT, and PPTM…KTVT. The cysteines at positions 48 and 99 are disulfide-linked. N-linked (GlcNAc...) asparagine; by host glycans are attached at residues Asn80, Asn103, and Asn113. A disulfide bond links Cys143 and Cys194. Residue Asn237 is glycosylated (N-linked (GlcNAc...) asparagine; by host). A disulfide bond links Cys242 and Cys309.

It belongs to the interleukin-1 receptor family. As to quaternary structure, interacts with mouse Il1b.

The protein localises to the secreted. Functionally, may reduce the host inflammatory response by interacting with inteleukin-1 beta (Il1b) and thus decreasing the association between IL1B and its cellular receptor. This chain is Interleukin-1-binding protein (OPG201), found in Bos taurus (Bovine).